We begin with the raw amino-acid sequence, 816 residues long: Chitin synthase 1 (816 aa).

The disordered stretch occupies residues 1–21 (MLSQGEILRNPSRTRLQRPPK). The Cytoplasmic segment spans residues 1-32 (MLSQGEILRNPSRTRLQRPPKSRSERKGWWYR). A helical transmembrane segment spans residues 33-53 (VTIFLTCLIPNFMLRCFGMTT). At 54–63 (PEVQHAWREK) the chain is on the extracellular side. Residues 64–84 (VALCICIFFCWIILGFTTYGM) traverse the membrane as a helical segment. Over 85-240 (NTIICKGSNQ…TPGCLLADTM (156 aa)) the chain is Cytoplasmic. The helical transmembrane segment at 241-261 (FWITTISIFGLIITKFLLGFF) threads the bilayer. Residues 262–697 (YSWYAKRRPK…QLVVVMELFG (436 aa)) are Extracellular-facing. N-linked (GlcNAc...) asparagine glycans are attached at residues asparagine 319 and asparagine 664. Residues 698–718 (TLVLPAAIIFTFVMIAVSILI) form a helical membrane-spanning segment. At 719 to 720 (EP) the chain is on the cytoplasmic side. Residues 721–741 (AWVPLIMLVGIFGLPAVLILI) traverse the membrane as a helical segment. The Extracellular segment spans residues 742–745 (TTME). The chain crosses the membrane as a helical span at residues 746-766 (IQYVFWCLVYILSIPIWNFVL). Topologically, residues 767 to 816 (PTYAFWHFDNFSWGDTRKVDGEGKEDEEGEFDHTKIRIRELEEFLSEANK) are cytoplasmic.

Belongs to the chitin synthase family. Class IV subfamily.

The protein localises to the cell membrane. It catalyses the reaction [(1-&gt;4)-N-acetyl-beta-D-glucosaminyl](n) + UDP-N-acetyl-alpha-D-glucosamine = [(1-&gt;4)-N-acetyl-beta-D-glucosaminyl](n+1) + UDP + H(+). Its function is as follows. Polymerizes chitin, a structural polymer of the cell wall and septum, by transferring the sugar moiety of UDP-GlcNAc to the non-reducing end of the growing chitin polymer. This chain is Chitin synthase 1 (CHS1), found in Encephalitozoon cuniculi (strain GB-M1) (Microsporidian parasite).